The chain runs to 64 residues: Large ribosomal subunit protein bL35 (64 aa).

This sequence belongs to the bacterial ribosomal protein bL35 family.

The chain is Large ribosomal subunit protein bL35 from Chlorobium chlorochromatii (strain CaD3).